Reading from the N-terminus, the 140-residue chain is ATP synthase epsilon chain (140 aa).

The protein belongs to the ATPase epsilon chain family. As to quaternary structure, F-type ATPases have 2 components, CF(1) - the catalytic core - and CF(0) - the membrane proton channel. CF(1) has five subunits: alpha(3), beta(3), gamma(1), delta(1), epsilon(1). CF(0) has three main subunits: a, b and c.

The protein localises to the cell inner membrane. Functionally, produces ATP from ADP in the presence of a proton gradient across the membrane. In Saccharophagus degradans (strain 2-40 / ATCC 43961 / DSM 17024), this protein is ATP synthase epsilon chain.